The following is a 733-amino-acid chain: Microtubule-associated protein tau (733 aa).

A compositionally biased stretch (basic and acidic residues) spans 1 to 16 (MADPRQEFDTMEDHAG). The disordered stretch occupies residues 1 to 548 (MADPRQEFDT…PVPMPDLKNV (548 aa)). An N-acetylalanine modification is found at Ala-2. Position 18 is a phosphotyrosine; by FYN (Tyr-18). Lys-33 is covalently cross-linked (Glycyl lysine isopeptide (Lys-Gly) (interchain with G-Cter in ubiquitin)). Phosphoserine is present on residues Ser-35 and Ser-50. Residues 50 to 60 (SETSDAKSTPT) are compositionally biased toward polar residues. Residues Thr-58, Thr-60, and Thr-100 each carry the phosphothreonine modification. At Arg-115 the chain carries Omega-N-methylarginine. Positions 126–137 (SDWTRQQVSSMS) are enriched in polar residues. Residues 157–172 (RPEDIEKSHPASELLR) show a composition bias toward basic and acidic residues. Ser-188 is subject to Phosphoserine. Residues 189 to 202 (EEEVDEDLTVDESS) show a composition bias toward acidic residues. Residues 203 to 212 (QDSPPSQASL) are compositionally biased toward polar residues. 2 stretches are compositionally biased toward basic and acidic residues: residues 270-294 (EEGHEAAPEFTFHVEIKASTPKEQD) and 354-366 (ASKDRTGNDEKKA). Residues 413-427 (KHVSSVTPRNGSPGT) are compositionally biased toward polar residues. Residue Thr-445 is modified to Phosphothreonine. Arg-447 carries the post-translational modification Omega-N-methylarginine. At Ser-451 the chain carries Phosphoserine. Residue Lys-455 is modified to N6,N6-dimethyllysine; alternate. Lys-455 carries the N6-acetyllysine; alternate modification. 3 positions are modified to phosphothreonine: Thr-461, Thr-467, and Thr-468. Residue Ser-470 is modified to Phosphoserine. Residue Thr-473 is modified to Phosphothreonine. Phosphoserine occurs at positions 477, 483, and 487. Residues 479 to 506 (EPPKSGERSGYSSPGSPGTPGSRSRTPS) show a composition bias toward low complexity. Tyr-489 bears the Phosphotyrosine mark. Phosphoserine is present on residues Ser-490, Ser-491, and Ser-494. Residues Thr-497 and Thr-504 each carry the phosphothreonine modification. Residue Ser-506 is modified to Phosphoserine. Thr-509 carries the phosphothreonine modification. Lys-517 bears the N6-acetyllysine mark. At Thr-523 the chain carries Phosphothreonine. Phosphoserine occurs at positions 527, 529, and 531. Tau/MAP repeat units lie at residues 536–566 (QTAPVPMPDLKNVRSKIGSTENLKHQPGGGK), 567–597 (VQIINKKLDLSNVQSKCGSKDNIKHVPGGGS), 598–628 (VQIVYKPVDLSKVTSKCGSLGNIHHKPGGGQ), and 629–660 (VEVKSEKLDFKDRVQSKIGSLDNITHVPGGGN). Lys-546 is covalently cross-linked (Glycyl lysine isopeptide (Lys-Gly) (interchain with G-Cter in ubiquitin)). Position 551 is an N6-acetyllysine; alternate (Lys-551). Position 551 is an N6-methyllysine; alternate (Lys-551). A Glycyl lysine isopeptide (Lys-Gly) (interchain with G-Cter in ubiquitin); alternate cross-link involves residue Lys-551. The residue at position 554 (Ser-554) is a Phosphoserine; by MARK1, BRSK1, BRSK2 and PHK. Lys-559 is covalently cross-linked (Glycyl lysine isopeptide (Lys-Gly) (interchain with G-Cter in ubiquitin)). N6-acetyllysine; alternate is present on Lys-573. Lys-573 participates in a covalent cross-link: Glycyl lysine isopeptide (Lys-Gly) (interchain with G-Cter in ubiquitin); alternate. 2 positions are modified to phosphoserine: Ser-577 and Ser-581. Lys-582 is modified (N6-acetyllysine). A disulfide bridge connects residues Cys-583 and Cys-614. Residue Ser-585 is modified to Phosphoserine. The residue at position 590 (Lys-590) is an N6-acetyllysine; alternate. Lys-590 is covalently cross-linked (Glycyl lysine isopeptide (Lys-Gly) (interchain with G-Cter in ubiquitin); alternate). Phosphoserine is present on Ser-597. At Lys-603 the chain carries N6,N6-dimethyllysine; alternate. N6-acetyllysine; alternate occurs at positions 603, 609, and 613. Glycyl lysine isopeptide (Lys-Gly) (interchain with G-Cter in ubiquitin); alternate cross-links involve residues Lys-603, Lys-609, and Lys-613. Ser-616 carries the post-translational modification Phosphoserine. N6-acetyllysine; alternate is present on residues Lys-623, Lys-635, and Lys-639. Glycyl lysine isopeptide (Lys-Gly) (interchain with G-Cter in ubiquitin); alternate cross-links involve residues Lys-623, Lys-635, and Lys-639. Arg-641 is subject to Omega-N-methylarginine. Ser-644 carries the phosphoserine modification. Lys-645 participates in a covalent cross-link: Glycyl lysine isopeptide (Lys-Gly) (interchain with G-Cter in ubiquitin). Ser-648 is subject to Phosphoserine. Lys-661 bears the N6-acetyllysine; alternate mark. Residue Lys-661 forms a Glycyl lysine isopeptide (Lys-Gly) (interchain with G-Cter in ubiquitin); alternate linkage. Lys-667 participates in a covalent cross-link: Glycyl lysine isopeptide (Lys-Gly) (interchain with G-Cter in ubiquitin). At Lys-677 the chain carries N6-acetyllysine; alternate. A Glycyl lysine isopeptide (Lys-Gly) (interchain with G-Cter in ubiquitin); alternate cross-link involves residue Lys-677. Tyr-686 carries the phosphotyrosine modification. Position 688 is a phosphoserine (Ser-688). Positions 690–709 (VVSGDTSPRHLSNVSSTGSI) are disordered. Ser-692 carries the phosphoserine; alternate modification. Ser-692 is a glycosylation site (O-linked (GlcNAc...) serine; alternate). Positions 693-708 (GDTSPRHLSNVSSTGS) are enriched in polar residues. Thr-695 carries the phosphothreonine modification. Phosphoserine occurs at positions 696, 701, 708, and 714. Thr-719 carries the phosphothreonine modification.

Interacts with MARK1, MARK2, MARK3 and MARK4. Interacts with SQSTM1 when polyubiquitinated. Interacts with PSMC2 through SQSTM1. Interacts with FKBP4. Binds to CSNK1D. Interacts with SGK1. Interacts with EPM2A; the interaction dephosphorylates MAPT at Ser-369. Interacts with PIN1. Interacts with LRRK2. Interacts with LRP1, leading to endocytosis; this interaction is reduced in the presence of LRPAP1/RAP. Post-translationally, polyubiquitinated. Requires functional TRAF6 and may provoke SQSTM1-dependent degradation by the proteasome. In terms of processing, phosphorylation at various serine and threonine residues in S-P or T-P motifs by proline-directed protein kinases (PDPK1, CDK1, CDK5, GSK3, MAPK) (a few sites per protein in interphase, more in mitosis), and at serine residues in K-X-G-S motifs by MAP/microtubule affinity-regulating kinase (MARK1, MARK2, MARK3, MARK4), causing detachment from microtubules, and their disassembly. Phosphorylated by PHK. Dephosphorylation at several serine and threonine residues by the serine/threonine phosphatase PPP5C. Phosphorylation at Ser-554 by BRSK1 and BRSK2 in neurons affects ability to bind microtubules and plays a role in neuron polarization. Phosphorylation at Ser-188 by SGK1 mediates microtubule depolymerization and neurite formation in hippocampal neurons. As to expression, expressed in neurons and at a lower level in the liver and kidney. Isoform PNS-tau is expressed in the peripheral nervous system while the others are expressed in the central nervous system.

The protein resides in the cytoplasm. Its subcellular location is the cytosol. It is found in the cell membrane. The protein localises to the cytoskeleton. It localises to the cell projection. The protein resides in the axon. Its subcellular location is the dendrite. It is found in the secreted. Its function is as follows. Promotes microtubule assembly and stability, and might be involved in the establishment and maintenance of neuronal polarity. The C-terminus binds axonal microtubules while the N-terminus binds neural plasma membrane components, suggesting that tau functions as a linker protein between both. Axonal polarity is predetermined by tau localization (in the neuronal cell) in the domain of the cell body defined by the centrosome. The short isoforms allow plasticity of the cytoskeleton whereas the longer isoforms may preferentially play a role in its stabilization. This chain is Microtubule-associated protein tau, found in Mus musculus (Mouse).